The sequence spans 352 residues: MAPLFNLMLAILSIFVGSCFSESPTKVQLVGGAHRCEGRVEVEHNGQWGTVCDDGWDRRDVAVVCRELNCGAVIQTPRGASYQPPASEQRVLIQGVDCNGTEDTLAQCELNYDVFDCSHEEDAGAQCENPDSDLLFIPEDVRLVDGPGHCQGRVEVLHQSQWSTVCKAGWNLQVSKVVCRQLGCGRALLTYGSCNKNTQGKGPIWMGKMSCSGQEANLRSCLLSRLENNCTHGEDTWMECEDPFELKLVGGDTPCSGRLEVLHKGSWGSVCDDNWGEKEDQVVCKQLGCGKSLHPSPKTRKIYGPGAGRIWLDDVNCSGKEQSLEFCRHRLWGYHDCTHKEDVEVICTDFDV.

Positions 1-21 (MAPLFNLMLAILSIFVGSCFS) are cleaved as a signal peptide. 3 SRCR domains span residues 27 to 128 (VQLV…AQCE), 141 to 241 (VRLV…MECE), and 246 to 348 (LKLV…VICT). 11 cysteine pairs are disulfide-bonded: C36–C70, C52–C117, C65–C127, C98–C108, C166–C230, C179–C240, C211–C221, C255–C289, C271–C337, C284–C347, and C317–C327. The N-linked (GlcNAc...) asparagine glycan is linked to N99. N229 carries an N-linked (GlcNAc...) asparagine glycan.

As to quaternary structure, interacts with FASN; the interaction is direct. Interacts (via SRCR2 and SRCR3) with pentameric IgM (via Fc region); disulfide-linked. N-glycosylated. N-glycan at Asn-99 possesses only alpha2,6-sialylated terminals, while Asn-229 possesses both alpha2,6-sialylated and non-sialylated terminals. N-glycosylation increases secretion. In terms of tissue distribution, specifically expressed in tissue macrophages. Expressed in thymus, liver, spleen and lymph nodes. Present in Th17 cells; mainly present in non-pathogenic Th17 cells.

The protein localises to the secreted. It localises to the cytoplasm. Its function is as follows. Secreted protein that acts as a key regulator of lipid synthesis: mainly expressed by macrophages in lymphoid and inflamed tissues and regulates mechanisms in inflammatory responses, such as infection or atherosclerosis. Able to inhibit lipid droplet size in adipocytes. Following incorporation into mature adipocytes via CD36-mediated endocytosis, associates with cytosolic FASN, inhibiting fatty acid synthase activity and leading to lipolysis, the degradation of triacylglycerols into glycerol and free fatty acids (FFA). CD5L-induced lipolysis occurs with progression of obesity: participates in obesity-associated inflammation following recruitment of inflammatory macrophages into adipose tissues, a cause of insulin resistance and obesity-related metabolic disease. Regulation of intracellular lipids mediated by CD5L has a direct effect on transcription regulation mediated by nuclear receptors ROR-gamma (RORC). Acts as a key regulator of metabolic switch in T-helper Th17 cells. Regulates the expression of pro-inflammatory genes in Th17 cells by altering the lipid content and limiting synthesis of cholesterol ligand of RORC, the master transcription factor of Th17-cell differentiation. CD5L is mainly present in non-pathogenic Th17 cells, where it decreases the content of polyunsaturated fatty acyls (PUFA), affecting two metabolic proteins MSMO1 and CYP51A1, which synthesize ligands of RORC, limiting RORC activity and expression of pro-inflammatory genes. Participates in obesity-associated autoimmunity via its association with IgM, interfering with the binding of IgM to Fcalpha/mu receptor and enhancing the development of long-lived plasma cells that produce high-affinity IgG autoantibodies. Also acts as an inhibitor of apoptosis in macrophages: promotes macrophage survival from the apoptotic effects of oxidized lipids in case of atherosclerosis. Involved in early response to microbial infection against various pathogens by acting as a pattern recognition receptor and by promoting autophagy. This chain is CD5 antigen-like (Cd5l), found in Mus musculus (Mouse).